A 124-amino-acid chain; its full sequence is Small ribosomal subunit protein uS12 (124 aa).

The tract at residues 9 to 28 is disordered; sequence RTERQTLSRKTKSPALRSCP. At Asp-89 the chain carries 3-methylthioaspartic acid. The tract at residues 104–124 is disordered; it reads TAGVKDRRQSRSKYGAKAPKE.

The protein belongs to the universal ribosomal protein uS12 family. Part of the 30S ribosomal subunit. Contacts proteins S8 and S17. May interact with IF1 in the 30S initiation complex.

With S4 and S5 plays an important role in translational accuracy. In terms of biological role, interacts with and stabilizes bases of the 16S rRNA that are involved in tRNA selection in the A site and with the mRNA backbone. Located at the interface of the 30S and 50S subunits, it traverses the body of the 30S subunit contacting proteins on the other side and probably holding the rRNA structure together. The combined cluster of proteins S8, S12 and S17 appears to hold together the shoulder and platform of the 30S subunit. The chain is Small ribosomal subunit protein uS12 from Synechococcus sp. (strain RCC307).